The primary structure comprises 287 residues: 2' cyclic ADP-D-ribose synthase BtTIR (287 aa).

The TIR domain occupies Lys-155 to Leu-287. Glu-230 is an active-site residue.

As to quaternary structure, homodimer.

It carries out the reaction NAD(+) = 2'cADPR + nicotinamide + H(+). Its function is as follows. NAD(+) hydrolase (NADase) that cleaves NAD(+) into nicotinamide and 2' cyclic ADP-D-ribose (2'cADPR). The protein is 2' cyclic ADP-D-ribose synthase BtTIR of Bacteroides thetaiotaomicron.